The sequence spans 159 residues: MKITILSVGKLKEKYWKQAIAEYEKRLGPYTKIELIEVPDEKAPENMSDKEIEQVKEKEGQRLLNKIKPQSTVITLEIKGKMLSSEGLAKELQTRMTQGQSDFTFVIGGSNGLHQDVLQRSNYALSFSNMTFPHQMMRVILIEQIYRAFKIMRGEAYHK.

Residues L76, G108, and 127-132 (FSNMTF) contribute to the S-adenosyl-L-methionine site.

Belongs to the RNA methyltransferase RlmH family. As to quaternary structure, homodimer.

It localises to the cytoplasm. The catalysed reaction is pseudouridine(1915) in 23S rRNA + S-adenosyl-L-methionine = N(3)-methylpseudouridine(1915) in 23S rRNA + S-adenosyl-L-homocysteine + H(+). In terms of biological role, specifically methylates the pseudouridine at position 1915 (m3Psi1915) in 23S rRNA. This is Ribosomal RNA large subunit methyltransferase H from Staphylococcus epidermidis (strain ATCC 35984 / DSM 28319 / BCRC 17069 / CCUG 31568 / BM 3577 / RP62A).